We begin with the raw amino-acid sequence, 274 residues long: DNA repair protein Rad1 (274 aa).

This sequence belongs to the rad1 family. In terms of assembly, component of the 9-1-1 checkpoint clamp complex consisting of Rad9 isoform A, Rad1 and Hus1-like; the interaction with Hus1-like is direct. Does not interact directly with Rad9; this interaction is probably mediated by Hus1-like. This complex probably also forms with Rad9 isoform B, however 9-1-1 complex containing Rad9 isoform A localizes to the nuclear periphery. Expressed in ovary.

It is found in the cytoplasm. Its subcellular location is the nucleus. The protein resides in the nucleus envelope. In Drosophila melanogaster (Fruit fly), this protein is DNA repair protein Rad1.